Here is a 403-residue protein sequence, read N- to C-terminus: Ribosomal RNA large subunit methyltransferase I (403 aa).

The 78-residue stretch at 9–86 folds into the PUA domain; that stretch reads YPRLVLSKGR…KAESIDIAFF (78 aa).

Belongs to the methyltransferase superfamily. RlmI family.

It localises to the cytoplasm. The enzyme catalyses cytidine(1962) in 23S rRNA + S-adenosyl-L-methionine = 5-methylcytidine(1962) in 23S rRNA + S-adenosyl-L-homocysteine + H(+). Specifically methylates the cytosine at position 1962 (m5C1962) of 23S rRNA. The protein is Ribosomal RNA large subunit methyltransferase I of Salmonella gallinarum (strain 287/91 / NCTC 13346).